The primary structure comprises 29 residues: Potassium channel toxin alpha-KTx 20.1 (29 aa).

Cystine bridges form between cysteine 2–cysteine 20, cysteine 7–cysteine 24, and cysteine 11–cysteine 26.

It belongs to the short scorpion toxin superfamily. Potassium channel inhibitor family. Alpha-KTx 20 subfamily. In terms of tissue distribution, expressed by the venom gland.

The protein resides in the secreted. In terms of biological role, reduces potassium currents through Kv1.2/KCNA2 and Kv1.3/KCNA3 voltage-gated potassium channels. The protein is Potassium channel toxin alpha-KTx 20.1 of Tityus trivittatus (Argentinean scorpion).